The following is a 358-amino-acid chain: 3-isopropylmalate dehydrogenase (358 aa).

Positions 92, 102, 130, and 224 each coordinate substrate. Residues Asp-224, Asp-248, and Asp-252 each coordinate Mg(2+). Residue Gly-282–Asn-294 coordinates NAD(+).

It belongs to the isocitrate and isopropylmalate dehydrogenases family. LeuB type 1 subfamily. In terms of assembly, homodimer. It depends on Mg(2+) as a cofactor. Requires Mn(2+) as cofactor.

The protein localises to the cytoplasm. The catalysed reaction is (2R,3S)-3-isopropylmalate + NAD(+) = 4-methyl-2-oxopentanoate + CO2 + NADH. The protein operates within amino-acid biosynthesis; L-leucine biosynthesis; L-leucine from 3-methyl-2-oxobutanoate: step 3/4. Its function is as follows. Catalyzes the oxidation of 3-carboxy-2-hydroxy-4-methylpentanoate (3-isopropylmalate) to 3-carboxy-4-methyl-2-oxopentanoate. The product decarboxylates to 4-methyl-2 oxopentanoate. This Bordetella pertussis (strain Tohama I / ATCC BAA-589 / NCTC 13251) protein is 3-isopropylmalate dehydrogenase.